The chain runs to 67 residues: uncharacterized protein (67 aa).

This is an uncharacterized protein from Lymantria dispar multicapsid nuclear polyhedrosis virus (LdMNPV).